The following is a 598-amino-acid chain: uncharacterized protein (598 aa).

The 284-residue stretch at 39 to 322 (LIMVFVFVTV…LSNQFNMIQM (284 aa)) folds into the ABC transmembrane type-1 domain. Helical transmembrane passes span 40-60 (IMVFVFVTVSSILGVLSPYLI), 80-100 (MLILGTIYALTSLLFWLQGKI), 150-170 (VLGNSIIQFFSGIVTLAGAVI), 177-197 (VILSLVTLSIVPLTVLITQIV), and 273-293 (LGFALISGFGGWLALKDIITV). One can recognise an ABC transporter domain in the interval 355–589 (IEFKNVWFSY…RGFYYELFTS (235 aa)). Residue 388 to 395 (GPTGSGKT) participates in ATP binding.

This sequence belongs to the ABC transporter superfamily.

The protein localises to the cell membrane. This is an uncharacterized protein from Thermotoga maritima (strain ATCC 43589 / DSM 3109 / JCM 10099 / NBRC 100826 / MSB8).